We begin with the raw amino-acid sequence, 451 residues long: MGSSQSVEIPGGGTEGYHVLRVQENSPGHRAGLEPFFDFIVSINGSRLNKDNDTLKDLLKANVEKPVKMLIYSSKTLELREASVTPSNLWGGQGLLGVSIRFCSFDGANENVWHVLEVESNSPAALAGLRPHSDYIIGADTVMNESEDLFSLIETHEAKPLKLYVYNTDTDNCREVIITPNSAWGGEGSLGCGIGYGYLHRIPTRPFEEGKKISLPGQMTGTPITPLKDGFTEVQLSSVSPPSLSPPGTTGVEQSLSGLSISSAPPAVSNVLSTGVPTVPLLPPQVNQSLASMPPMNPATTLPSLMPLSAGLPSLPNLPSLSNFNLPAPHIMPGVGLPELGSPGLPPLPSLPPRNLPGIAPLPMLSDFLPSFPLVPEGSSAASAGEPLSSLPAMGPPSDPVMTTAKADASSLTVDVTSPASKVPTTVEDRVSDCTPAVEKPVSDADASEPS.

Gly-2 carries N-myristoyl glycine lipidation. PDZ GRASP-type domains are found at residues 15–105 (EGYH…FCSF) and 111–199 (NVWH…YGYL). Positions 15-215 (EGYHVLRVQE…PFEEGKKISL (201 aa)) are GRASP. 2 positions are modified to dimethylated arginine: Arg-30 and Arg-47. Positions 194–199 (IGYGYL) are important for membrane binding. Residue Ser-214 is modified to Phosphoserine. Residue Thr-222 is modified to Phosphothreonine. At Thr-225 the chain carries Phosphothreonine; by MAPK. The span at 236-252 (LSSVSPPSLSPPGTTGV) shows a compositional bias: low complexity. Disordered stretches follow at residues 236–255 (LSSV…VEQS) and 377–451 (EGSS…SEPS). A compositionally biased stretch (polar residues) spans 410-424 (SSLTVDVTSPASKVP). Ser-411 carries the post-translational modification Phosphoserine. Phosphothreonine occurs at positions 417 and 435. 2 positions are modified to phosphoserine: Ser-443 and Ser-448.

This sequence belongs to the GORASP family. Homodimer. Homooligomer. ER stress induces phosphorylation-dependent monomerization. Interacts with BLZF1/Golgin 45. Identified in a complex with RAB2 and GORASP2. Interacts with JAM2 and JAM3. Interacts with members of the p24 cargo receptors. Interacts with CNIH and the cytoplasmic domain of transmembrane TGFA, prior its transit in the trans-Golgi. Interacts with KCTD5. Interacts with TMED2 and TMED3. Interacts with SEC16A in response to ER stress. Interacts (via PDZ GRASP-type 1 domain) with core-glycosylated CFTR in response to ER stress. Post-translationally, myristoylated. Myristoylation is essential for the Golgi targeting. In terms of processing, palmitoylated. Phosphorylated in mitotic cells. ER stress-induced phosphorylation at Ser-443 induces monomerization and subsequent relocalization from Golgi to ER which is essential for mediating unconventional (ER/Golgi-independent) trafficking of CFTR to the cell membrane. Detected in lung, heart and testis. Colocalized in a polarized fashion in the acrosome region with JAM3 in round spermatids (at protein level).

It is found in the golgi apparatus membrane. It localises to the endoplasmic reticulum membrane. Its subcellular location is the golgi apparatus. Functionally, key structural protein of the Golgi apparatus. The membrane cisternae of the Golgi apparatus adhere to each other to form stacks, which are aligned side by side to form the Golgi ribbon. Acting in concert with GORASP1/GRASP65, is required for the formation and maintenance of the Golgi ribbon, and may be dispensable for the formation of stacks. However, other studies suggest that GORASP2 plays a role in assembly and membrane stacking of the Golgi cisternae, and in the process by which Golgi stacks reform after breakdown during mitosis and meiosis. May regulate the intracellular transport and presentation of a defined set of transmembrane proteins, such as transmembrane TGFA. Required for normal acrosome formation during spermiogenesis and normal male fertility, probably by promoting colocalization of JAM2 and JAM3 at contact sites between germ cells and Sertoli cells. Mediates ER stress-induced unconventional (ER/Golgi-independent) trafficking of core-glycosylated CFTR to cell membrane. This is Golgi reassembly-stacking protein 2 (Gorasp2) from Mus musculus (Mouse).